The primary structure comprises 32 residues: Protamine-1 (32 aa).

A disordered region spans residues 1-32 (PRRRRASSGRPVRRRRRPKMSRRRRRGGRRRR).

As to expression, testis.

The protein resides in the nucleus. The protein localises to the chromosome. Functionally, protamines substitute for histones in the chromatin of sperm during the haploid phase of spermatogenesis. They compact sperm DNA into a highly condensed, stable and inactive complex. In Esox lucius (Northern pike), this protein is Protamine-1.